Here is a 292-residue protein sequence, read N- to C-terminus: Rab effector Noc2 (292 aa).

The 118-residue stretch at 41-158 folds into the RabBD domain; sequence QRKSQSLSPA…KRSGAWFYKG (118 aa). The FYVE-type zinc finger occupies 89-146; the sequence is GNGLSQCLLCGEVLGFLGSSSVFCKDCRKKVCTKCGIEASPSQKRPLWLCKICSEQRE. Positions 95, 98, 112, 115, 120, 123, 138, and 141 each coordinate Zn(2+). Residues 175-292 form a disordered region; it reads PSFRPLPVEP…RTLAGPRGPR (118 aa). Basic and acidic residues predominate over residues 221-235; the sequence is LDDRLRPAGVRDPKG. Residue S248 is modified to Phosphoserine. Residues 257–269 are compositionally biased toward low complexity; it reads ASCLSGSQSSLAS.

As to quaternary structure, recruited to dense-core vesicles through specific interaction with RAB27A in endocrine cells. Interacts with RAB3A, RAB3B, RAB3C and RAB3D. Interacts with ZYX.

The protein resides in the cytoplasm. The protein localises to the cytoplasmic vesicle. It localises to the secretory vesicle membrane. Rab GTPase effector involved in the late steps of regulated exocytosis, both in endocrine and exocrine cells. This chain is Rab effector Noc2 (RPH3AL), found in Bos taurus (Bovine).